A 385-amino-acid polypeptide reads, in one-letter code: MTAISLGVPEVPVRPIAERRVSRQIQVGPLAVGGTAPVSVQSMTTTRTSDIGATLQQIAELTASGCQIVRVACPTQDDADALAVIARKSQIPVVADIHFQPKYVFAAIEAGCAAVRVNPGNIKQFDDKVKEIARAAKEHGTPIRIGVNAGSLDRRLLEKYGKATPEALVESALWEASLFEEHDFRDIKISVKHNDPVVMVNAYRQLAAQCDYPLHLGVTEAGPAFQGTIKSAVAFGALLSEGIGDTIRVSLSAPPVEEIKVGIQILESLGLRQRRLEIVSCPSCGRAQVDVYKLAEEVTAGLEGMEVPLRVAVMGCVVNGPGEAREADLGVASGNGKGQIFVKGEVIKTVPESKIVETLIEEAMKIAEQMEQNGVASGEPAVTVS.

Cys-281, Cys-284, Cys-316, and Glu-323 together coordinate [4Fe-4S] cluster.

It belongs to the IspG family. Requires [4Fe-4S] cluster as cofactor.

It catalyses the reaction (2E)-4-hydroxy-3-methylbut-2-enyl diphosphate + oxidized [flavodoxin] + H2O + 2 H(+) = 2-C-methyl-D-erythritol 2,4-cyclic diphosphate + reduced [flavodoxin]. It participates in isoprenoid biosynthesis; isopentenyl diphosphate biosynthesis via DXP pathway; isopentenyl diphosphate from 1-deoxy-D-xylulose 5-phosphate: step 5/6. Its function is as follows. Converts 2C-methyl-D-erythritol 2,4-cyclodiphosphate (ME-2,4cPP) into 1-hydroxy-2-methyl-2-(E)-butenyl 4-diphosphate. The polypeptide is 4-hydroxy-3-methylbut-2-en-1-yl diphosphate synthase (flavodoxin) 2 (Streptomyces avermitilis (strain ATCC 31267 / DSM 46492 / JCM 5070 / NBRC 14893 / NCIMB 12804 / NRRL 8165 / MA-4680)).